Consider the following 246-residue polypeptide: tRNA (guanine-N(1)-)-methyltransferase (246 aa).

Residues Gly-112 and 131-136 contribute to the S-adenosyl-L-methionine site; that span reads IGDYVL.

The protein belongs to the RNA methyltransferase TrmD family. Homodimer.

It localises to the cytoplasm. It carries out the reaction guanosine(37) in tRNA + S-adenosyl-L-methionine = N(1)-methylguanosine(37) in tRNA + S-adenosyl-L-homocysteine + H(+). Specifically methylates guanosine-37 in various tRNAs. The chain is tRNA (guanine-N(1)-)-methyltransferase from Thermosipho africanus (strain TCF52B).